The following is a 267-amino-acid chain: Ribosomal RNA small subunit methyltransferase A (267 aa).

S-adenosyl-L-methionine is bound by residues Asn18, Leu20, Gly45, Glu66, Asp91, and Asn112.

Belongs to the class I-like SAM-binding methyltransferase superfamily. rRNA adenine N(6)-methyltransferase family. RsmA subfamily.

The protein resides in the cytoplasm. It carries out the reaction adenosine(1518)/adenosine(1519) in 16S rRNA + 4 S-adenosyl-L-methionine = N(6)-dimethyladenosine(1518)/N(6)-dimethyladenosine(1519) in 16S rRNA + 4 S-adenosyl-L-homocysteine + 4 H(+). Specifically dimethylates two adjacent adenosines (A1518 and A1519) in the loop of a conserved hairpin near the 3'-end of 16S rRNA in the 30S particle. May play a critical role in biogenesis of 30S subunits. This chain is Ribosomal RNA small subunit methyltransferase A, found in Shewanella woodyi (strain ATCC 51908 / MS32).